Reading from the N-terminus, the 600-residue chain is MKTHYFKKIFNLKFLVIFFSILFCILLILDLTFERRIKGIKKRTDEIIKKIKDDNHLVEEIVFYETNSTIFEKSFYRVEILVKNKNNLTTKEKWYAVVDSIFFHEIHSLIKGRENIQIKDPKTDFHLSELILSLVPIVSSTIFMFYIISNIKKSSGKLNSNAKVSAKQKSLFTFKDVAGNTEEKEEMTELIDFLKQPQKYETIGAAIPKGVLLEGPPGTGKTLLAKALAGEASVPFYAVSGSEFVEMYVGVGASRVRTLFKEAKLNAPCVLFIDEIDVLGGKRGGNSSGGNQEKDQTLNQLLTEMDGFTQAKGIIVIGATNRADMLDAALLRPGRFDRKILVNLPDIKSRAEILKLHAQNKKLSSDIDFHQLAQQTPGMSGAQLAAVLNEASILTVRNHKDFITMTELSEALDRVLMGPAKKSIKYDPEERRMVAYHEAGHAVIGIKLKHAQKVQKITIIPRGNAGGYNLMMPEKETFFSSRKRMLAQIQSFLGGRVAEELVFDDISSGAFDDFRQATKIARLMVTKYGMSDLGVSQDSEFSDKKLIDTAIKKIIDNCYARTKHLMLENKTLLDQIAHLLLEQETITQAEIEQLVVNTKK.

At 1–8 (MKTHYFKK) the chain is on the cytoplasmic side. The helical transmembrane segment at 9 to 29 (IFNLKFLVIFFSILFCILLIL) threads the bilayer. Residues 30-130 (DLTFERRIKG…PKTDFHLSEL (101 aa)) are Extracellular-facing. A helical transmembrane segment spans residues 131–151 (ILSLVPIVSSTIFMFYIISNI). The Cytoplasmic segment spans residues 152-600 (KKSSGKLNSN…IEQLVVNTKK (449 aa)). 215–222 (GPPGTGKT) is an ATP binding site. Histidine 437 is a Zn(2+) binding site. Glutamate 438 is an active-site residue. 2 residues coordinate Zn(2+): histidine 441 and aspartate 513.

It in the central section; belongs to the AAA ATPase family. This sequence in the C-terminal section; belongs to the peptidase M41 family. Homohexamer. It depends on Zn(2+) as a cofactor.

It localises to the cell membrane. In terms of biological role, acts as a processive, ATP-dependent zinc metallopeptidase for both cytoplasmic and membrane proteins. Plays a role in the quality control of integral membrane proteins. The sequence is that of ATP-dependent zinc metalloprotease FtsH 1 from Phytoplasma mali (strain AT).